The following is a 180-amino-acid chain: Ribulose bisphosphate carboxylase small subunit, chloroplastic 3 (180 aa).

Residues 1-56 (MASSVMSSAAVATRGNGAQASMVAPFTGLKSTASFPVSRKQNLDITSIASNGGRVS) constitute a chloroplast transit peptide.

The protein belongs to the RuBisCO small chain family. In terms of assembly, heterohexadecamer of 8 large and 8 small subunits. (Microbial infection) Binds to tobamovirus movement protein; this interaction seems required for viral systemic movement.

It localises to the plastid. The protein localises to the chloroplast. Its subcellular location is the cell junction. The protein resides in the plasmodesma. In terms of biological role, ruBisCO catalyzes two reactions: the carboxylation of D-ribulose 1,5-bisphosphate, the primary event in carbon dioxide fixation, as well as the oxidative fragmentation of the pentose substrate. Both reactions occur simultaneously and in competition at the same active site. Although the small subunit is not catalytic it is essential for maximal activity. Involved in antiviral defenses. The polypeptide is Ribulose bisphosphate carboxylase small subunit, chloroplastic 3 (Solanum lycopersicum (Tomato)).